The sequence spans 277 residues: MIOREX complex component 2 (277 aa).

Belongs to the NAD(P)-dependent epimerase/dehydratase family. As to quaternary structure, associates with the mitochondrial ribosome. Component of a multi-subunit COQ enzyme complex.

It localises to the mitochondrion. The protein operates within cofactor biosynthesis; ubiquinone biosynthesis. Its function is as follows. Component of MIOREX complexes, large expressome-like assemblies of ribosomes with factors involved in all the steps of post-transcriptional gene expression. Component of a multi-subunit COQ enzyme complex required for coenzyme Q biosynthesis. This chain is MIOREX complex component 2, found in Saccharomyces cerevisiae (strain ATCC 204508 / S288c) (Baker's yeast).